The chain runs to 518 residues: Arginyl-tRNA--protein transferase 1 (518 aa).

S169 bears the Phosphoserine mark. The segment at E175–P203 is disordered.

It belongs to the R-transferase family. In terms of assembly, monomer. Interacts with LIAT1; LIAT1 is not a substrate of ATE1, the interaction takes place in the cytoplasm and seems to increase ATE1 arginyltransferase activity.

The protein resides in the nucleus. It localises to the cytoplasm. It catalyses the reaction an N-terminal L-alpha-aminoacyl-[protein] + L-arginyl-tRNA(Arg) = an N-terminal L-arginyl-L-aminoacyl-[protein] + tRNA(Arg) + H(+). Its function is as follows. Involved in the post-translational conjugation of arginine to the N-terminal aspartate or glutamate of a protein. This arginylation is required for degradation of the protein via the ubiquitin pathway. Does not arginylate cysteine residues. The polypeptide is Arginyl-tRNA--protein transferase 1 (Homo sapiens (Human)).